We begin with the raw amino-acid sequence, 405 residues long: Bestrophin homolog 14 (405 aa).

4 consecutive transmembrane segments (helical) span residues 28–48 (LIGF…LLDE), 63–83 (IGAQ…LIVA), 223–243 (LVYT…CLIG), and 256–276 (EITI…LGWL).

The protein belongs to the anion channel-forming bestrophin (TC 1.A.46) family. Calcium-sensitive chloride channel subfamily.

It is found in the membrane. This chain is Bestrophin homolog 14 (best-14), found in Caenorhabditis elegans.